Here is a 193-residue protein sequence, read N- to C-terminus: uncharacterized protein (193 aa).

The signal sequence occupies residues 1–22; that stretch reads MAVQKNVIKGILAGTFALMLSG. A lipid anchor (N-palmitoyl cysteine) is attached at Cys23. Cys23 carries S-diacylglycerol cysteine lipidation.

It is found in the cell membrane. This is an uncharacterized protein from Escherichia coli (strain K12).